Here is a 347-residue protein sequence, read N- to C-terminus: uncharacterized protein (347 aa).

Positions 39, 65, 95, 98, 101, 109, and 152 each coordinate Zn(2+).

Belongs to the zinc-containing alcohol dehydrogenase family. Zn(2+) serves as cofactor.

This is an uncharacterized protein from Escherichia coli (strain K12).